The sequence spans 1047 residues: Carbamoyl phosphate synthase large chain (1047 aa).

The tract at residues 1–398 is carboxyphosphate synthetic domain; that stretch reads MPRRDDIHRI…ALMKAIASLD (398 aa). ATP contacts are provided by Arg-129, Arg-169, Gly-175, Gly-176, Glu-208, Leu-210, Glu-215, Gly-241, Val-242, His-243, Gln-284, and Glu-296. The region spanning 133 to 325 is the ATP-grasp 1 domain; that stretch reads YEFLKAMGEP…IARIAAKIAA (193 aa). Residues Gln-284, Glu-296, and Asn-298 each coordinate Mg(2+). Gln-284, Glu-296, and Asn-298 together coordinate Mn(2+). The segment at 399–539 is oligomerization domain; the sequence is NAFSSNIRLH…YSTYEDEDET (141 aa). Positions 540–916 are carbamoyl phosphate synthetic domain; the sequence is PDLSGSIMII…ALRKSLQRSI (377 aa). The ATP-grasp 2 domain maps to 665–854; the sequence is SRVIEGLGIK…WVRLAVECMI (190 aa). Arg-701, Lys-738, Leu-740, Glu-745, Gly-770, Val-771, His-772, Ser-773, Gln-813, and Glu-825 together coordinate ATP. 3 residues coordinate Mg(2+): Gln-813, Glu-825, and Asn-827. The Mn(2+) site is built by Gln-813, Glu-825, and Asn-827. The MGS-like domain maps to 910–1047; the sequence is KSLQRSISSV…REIGDYLQVS (138 aa). The tract at residues 916-1047 is allosteric domain; the sequence is ISSVLITVRD…REIGDYLQVS (132 aa).

The protein belongs to the CarB family. In terms of assembly, composed of two chains; the small (or glutamine) chain promotes the hydrolysis of glutamine to ammonia, which is used by the large (or ammonia) chain to synthesize carbamoyl phosphate. Tetramer of heterodimers (alpha,beta)4. Mg(2+) serves as cofactor. It depends on Mn(2+) as a cofactor.

It carries out the reaction hydrogencarbonate + L-glutamine + 2 ATP + H2O = carbamoyl phosphate + L-glutamate + 2 ADP + phosphate + 2 H(+). The catalysed reaction is hydrogencarbonate + NH4(+) + 2 ATP = carbamoyl phosphate + 2 ADP + phosphate + 2 H(+). The protein operates within amino-acid biosynthesis; L-arginine biosynthesis; carbamoyl phosphate from bicarbonate: step 1/1. It participates in pyrimidine metabolism; UMP biosynthesis via de novo pathway; (S)-dihydroorotate from bicarbonate: step 1/3. Its function is as follows. Large subunit of the glutamine-dependent carbamoyl phosphate synthetase (CPSase). CPSase catalyzes the formation of carbamoyl phosphate from the ammonia moiety of glutamine, carbonate, and phosphate donated by ATP, constituting the first step of 2 biosynthetic pathways, one leading to arginine and/or urea and the other to pyrimidine nucleotides. The large subunit (synthetase) binds the substrates ammonia (free or transferred from glutamine from the small subunit), hydrogencarbonate and ATP and carries out an ATP-coupled ligase reaction, activating hydrogencarbonate by forming carboxy phosphate which reacts with ammonia to form carbamoyl phosphate. In Thermoplasma acidophilum (strain ATCC 25905 / DSM 1728 / JCM 9062 / NBRC 15155 / AMRC-C165), this protein is Carbamoyl phosphate synthase large chain.